We begin with the raw amino-acid sequence, 64 residues long: Large ribosomal subunit protein bL35 (64 aa).

It belongs to the bacterial ribosomal protein bL35 family.

This chain is Large ribosomal subunit protein bL35, found in Vibrio atlanticus (strain LGP32) (Vibrio splendidus (strain Mel32)).